Here is a 919-residue protein sequence, read N- to C-terminus: Synphilin-1 (919 aa).

Disordered regions lie at residues 80–99 (SPLKHQPETLENNESDDQKN), 108–140 (GGESDLGPQPQELGPGDGVGGPPGKSSEPSTSL), and 287–313 (SSAAESKPEEQVSGLNRTSSQGPEERS). Over residues 299-308 (SGLNRTSSQG) the composition is skewed to polar residues. ANK repeat units follow at residues 349–380 (NGNNLLHIAASQGHAECLQHLTSLMGEDCLNE), 384–413 (EKLTPAGLAIKNGQLECVRWMVSETEAIAE), 419–448 (DFPSLIHYAGCYGQEKILLWLLQFMQEQGI), and 456–485 (DGNSAVHVASQHGYLGCIQTLVEYGANVTM). Positions 515–552 (CMSLASQVVKLTKQLKEQTVERVTLQNQLQQFLEAQKS) form a coiled coil. Disordered regions lie at residues 549 to 615 (AQKS…KDED), 666 to 713 (RLRQ…SMDS), and 728 to 919 (SGGR…NKAA). Positions 555-571 (KSLPSSPSSPSSPASRK) are enriched in low complexity. Residues 603-632 (ASSRARPKAKDEDSDKILRQLLGKEISENV) form an ANK 5 repeat. The segment covering 667–685 (LRQLMQRSLSESDTDSNNS) has biased composition (low complexity). The span at 686–700 (EDPKTTPVRKADRPR) shows a compositional bias: basic and acidic residues. One copy of the ANK 6 repeat lies at 699 to 729 (PRPQPIVESVESMDSAESLHLMIKKHTLASG). Positions 774 to 785 (PSGDPQQPSPDS) are enriched in low complexity. Basic and acidic residues predominate over residues 833–842 (NGEKDKDKGR). The segment covering 844 to 854 (LQRTSTSNESG) has biased composition (polar residues). Residues 874–886 (NQNNNNNYQAANQ) are compositionally biased toward low complexity.

In terms of assembly, homodimer. Heterodimer of isoform 1 and isoform 2. Interacts with SIAH1, SIAH2, SNCA, RNF19A and PRKN. Isoform 2 has a strong tendency to form aggregates and can sequester isoform 1. Ubiquitinated; mediated by SIAH1, SIAH2 or RNF19A and leading to its subsequent proteasomal degradation. In the absence of proteasomal degradation, ubiquitinated SNCAIP accumulates in cytoplasmic inclusion bodies. Isoform 2 is subject to limited ubiquitination that does not lead to proteasomal degradation. Detected in brain (at protein level). Widely expressed, with highest levels in brain, heart and placenta.

The protein localises to the cytoplasm. Isoform 2 inhibits the ubiquitin ligase activity of SIAH1 and inhibits proteasomal degradation of target proteins. Isoform 2 inhibits autoubiquitination and proteasomal degradation of SIAH1, and thereby increases cellular levels of SIAH. Isoform 2 modulates SNCA monoubiquitination by SIAH1. The polypeptide is Synphilin-1 (SNCAIP) (Homo sapiens (Human)).